A 206-amino-acid polypeptide reads, in one-letter code: Nucleoside triphosphate pyrophosphatase (206 aa).

Aspartate 76 serves as the catalytic Proton acceptor.

This sequence belongs to the Maf family. The cofactor is a divalent metal cation.

The protein resides in the cytoplasm. The catalysed reaction is a ribonucleoside 5'-triphosphate + H2O = a ribonucleoside 5'-phosphate + diphosphate + H(+). It carries out the reaction a 2'-deoxyribonucleoside 5'-triphosphate + H2O = a 2'-deoxyribonucleoside 5'-phosphate + diphosphate + H(+). Its function is as follows. Nucleoside triphosphate pyrophosphatase. May have a dual role in cell division arrest and in preventing the incorporation of modified nucleotides into cellular nucleic acids. The protein is Nucleoside triphosphate pyrophosphatase of Streptomyces avermitilis (strain ATCC 31267 / DSM 46492 / JCM 5070 / NBRC 14893 / NCIMB 12804 / NRRL 8165 / MA-4680).